We begin with the raw amino-acid sequence, 169 residues long: Chorion protein E1 (169 aa).

A signal peptide spans 1–19; sequence MAWFTTVLIVASLLGSLVA. Tetradecapeptide repeat units follow at residues 114-127 and 128-141; these read GAGR…KPRS and GAGK…KPKS. A disordered region spans residues 119-169; sequence AEMEGKPRSGAGKGAEMEGKPKSTESVAETNTVAAGTGVVAEKTGTESSAS. A compositionally biased stretch (polar residues) spans 142-152; it reads TESVAETNTVA.

This protein is one of two components of the prominent 'filler' that helps mold the shape of aeropyle crowns. The polypeptide is Chorion protein E1 (Antheraea polyphemus (Polyphemus moth)).